Here is a 351-residue protein sequence, read N- to C-terminus: MKNMPENHNPQANAWTAEFPPEMSYVVFAQIGIQSKSLDHAAEHLGMMKKSFDLRTGPKHVDRALHQGADGYQDSIFLAYWDEPETFKSWVADPEVQKWWSGKKIDENSPIGYWSEVTTIPIDHFETLHSGENYDNGVSHFVPIKHTEVHEYWGAMRDRMPVSASSDLESPLGLQLPEPIVRESFGKRLKVTAPDNICLIRTAQNWSKCGSGERETYIGLVEPTLIKANTFLRENASETGCISSKLVYEQTHDGEIVDKSCVIGYYLSMGHLERWTHDHPTHKAIYGTFYEMLKRHDFKTELALWHEVSVLQSKDIELIYVNCHPSTGFLPFFEVTEIQEPLLKSPSVRIQ.

Belongs to the heme-containing dehydratase family. As to quaternary structure, monomer. It depends on heme b as a cofactor.

The enzyme catalyses (Z)-phenylacetaldehyde oxime = phenylacetonitrile + H2O. Functionally, catalyzes the stoichiometric dehydration of Z-phenylacetaldoxime to phenylacetonitrile. Prefers the Z-form of phenylacetaldoxime over its E-isomer. In Bacillus sp. (strain OxB-1), this protein is Phenylacetaldoxime dehydratase.